A 248-amino-acid chain; its full sequence is Adenosylcobinamide-GDP ribazoletransferase (248 aa).

The next 6 helical transmembrane spans lie at 36–56, 59–79, 113–133, 137–157, 170–190, and 199–219; these read FFLPVVASIIGGMEFLIYLGL, FLPPNVIIVLLLLFTAMITGG, FGTIAMIINLLLKYQLLYSLV, CSIAIILAPVIGRISILFLCL, IFIGNMSKPIIFLITIIALAM, and ITIISFTAVLIITYLFYLLCL.

This sequence belongs to the CobS family. Mg(2+) serves as cofactor.

The protein localises to the cell membrane. The enzyme catalyses alpha-ribazole + adenosylcob(III)inamide-GDP = adenosylcob(III)alamin + GMP + H(+). The catalysed reaction is alpha-ribazole 5'-phosphate + adenosylcob(III)inamide-GDP = adenosylcob(III)alamin 5'-phosphate + GMP + H(+). Its pathway is cofactor biosynthesis; adenosylcobalamin biosynthesis; adenosylcobalamin from cob(II)yrinate a,c-diamide: step 7/7. In terms of biological role, joins adenosylcobinamide-GDP and alpha-ribazole to generate adenosylcobalamin (Ado-cobalamin). Also synthesizes adenosylcobalamin 5'-phosphate from adenosylcobinamide-GDP and alpha-ribazole 5'-phosphate. The polypeptide is Adenosylcobinamide-GDP ribazoletransferase (Clostridium botulinum (strain 657 / Type Ba4)).